A 355-amino-acid polypeptide reads, in one-letter code: Protein RecA (355 aa).

Residue 72–79 (GPESSGKT) coordinates ATP.

This sequence belongs to the RecA family.

Its subcellular location is the cytoplasm. Functionally, can catalyze the hydrolysis of ATP in the presence of single-stranded DNA, the ATP-dependent uptake of single-stranded DNA by duplex DNA, and the ATP-dependent hybridization of homologous single-stranded DNAs. It interacts with LexA causing its activation and leading to its autocatalytic cleavage. The polypeptide is Protein RecA (Thermosynechococcus vestitus (strain NIES-2133 / IAM M-273 / BP-1)).